The chain runs to 85 residues: Large ribosomal subunit protein bL27 (85 aa).

The disordered stretch occupies residues 1–25; sequence MAHKKAGSSSKNGRDSNPQYLGVKR. The span at 7–19 shows a compositional bias: polar residues; it reads GSSSKNGRDSNPQ.

It belongs to the bacterial ribosomal protein bL27 family.

In Micrococcus luteus (strain ATCC 4698 / DSM 20030 / JCM 1464 / CCM 169 / CCUG 5858 / IAM 1056 / NBRC 3333 / NCIMB 9278 / NCTC 2665 / VKM Ac-2230) (Micrococcus lysodeikticus), this protein is Large ribosomal subunit protein bL27.